A 255-amino-acid polypeptide reads, in one-letter code: tRNA1(Val) (adenine(37)-N6)-methyltransferase (255 aa).

This sequence belongs to the methyltransferase superfamily. tRNA (adenine-N(6)-)-methyltransferase family.

The protein resides in the cytoplasm. The enzyme catalyses adenosine(37) in tRNA1(Val) + S-adenosyl-L-methionine = N(6)-methyladenosine(37) in tRNA1(Val) + S-adenosyl-L-homocysteine + H(+). Its function is as follows. Specifically methylates the adenine in position 37 of tRNA(1)(Val) (anticodon cmo5UAC). The protein is tRNA1(Val) (adenine(37)-N6)-methyltransferase of Porphyromonas gingivalis (strain ATCC BAA-308 / W83).